The following is a 434-amino-acid chain: Chaperone SurA (434 aa).

A signal peptide spans 1-20 (MKNWRTLILGLVICANTAFA). PpiC domains follow at residues 171 to 272 (DTEL…KVND) and 282 to 382 (VTEV…QLVD).

It is found in the periplasm. It catalyses the reaction [protein]-peptidylproline (omega=180) = [protein]-peptidylproline (omega=0). Its function is as follows. Chaperone involved in the correct folding and assembly of outer membrane proteins. Recognizes specific patterns of aromatic residues and the orientation of their side chains, which are found more frequently in integral outer membrane proteins. May act in both early periplasmic and late outer membrane-associated steps of protein maturation. The polypeptide is Chaperone SurA (Yersinia pestis bv. Antiqua (strain Antiqua)).